The primary structure comprises 599 residues: Elongation factor 4 (599 aa).

In terms of domain architecture, tr-type G spans 4 to 186 (EHIRNFSIIA…EIVKKIPPPQ (183 aa)). GTP contacts are provided by residues 16 to 21 (DHGKST) and 133 to 136 (NKID).

This sequence belongs to the TRAFAC class translation factor GTPase superfamily. Classic translation factor GTPase family. LepA subfamily.

The protein resides in the cell inner membrane. The catalysed reaction is GTP + H2O = GDP + phosphate + H(+). Its function is as follows. Required for accurate and efficient protein synthesis under certain stress conditions. May act as a fidelity factor of the translation reaction, by catalyzing a one-codon backward translocation of tRNAs on improperly translocated ribosomes. Back-translocation proceeds from a post-translocation (POST) complex to a pre-translocation (PRE) complex, thus giving elongation factor G a second chance to translocate the tRNAs correctly. Binds to ribosomes in a GTP-dependent manner. This chain is Elongation factor 4, found in Geobacter sp. (strain M21).